The following is a 463-amino-acid chain: Golgi-associated PDZ and coiled-coil motif-containing protein (463 aa).

Residue serine 2 is modified to N-acetylserine. Residues 85–201 (AQTVSQINHK…RHIAVLQAEV (117 aa)) are a coiled coil. Positions 289-372 (KVLLLKEDHE…EIEFEVVYVA (84 aa)) constitute a PDZ domain. Residues serine 402 and serine 405 each carry the phosphoserine modification.

Homooligomer. Interacts with FZD5. Interacts with FZD8. Interacts with GRID2 and BECN1. Interacts with CSPG5. Interacts with CLCN3. Interacts with STX6. Interacts with CFTR. Interacts with ASIC3. Interacts with GOLGA3. Interacts with NLGN1. Interacts with RHOQ. Interacts with MARCHF2; the interaction leads to CFTR ubiquitination and degradation. May interact with CACNG2. Interacts with CCDC62. Ubiquitously expressed (at protein level). Expressed in dorsal root glanglion (DRG), spinal cord and brain. Isoform 1 is preferentially expressed in whole brain (at protein level) and cerebellum. Expressed in spermatocytes and spermatides but not in Sertoli cells and spermatogonia.

The protein localises to the cytoplasm. Its subcellular location is the golgi apparatus membrane. It localises to the golgi apparatus. The protein resides in the trans-Golgi network membrane. It is found in the synapse. The protein localises to the postsynaptic density. Its subcellular location is the cell projection. It localises to the dendrite. In terms of biological role, plays a role in intracellular protein trafficking and degradation. May regulate CFTR chloride currents and acid-induced ASIC3 currents by modulating cell surface expression of both channels. May also regulate the intracellular trafficking of the ADR1B receptor. May play a role in autophagy. Together with MARCHF2 mediates the ubiquitination and lysosomal degradation of CFTR. Overexpression results in CFTR intracellular retention and degradation in the lysosomes. This is Golgi-associated PDZ and coiled-coil motif-containing protein from Mus musculus (Mouse).